The chain runs to 156 residues: D-aminoacyl-tRNA deacylase (156 aa).

Residues 137-138 (GP) carry the Gly-cisPro motif, important for rejection of L-amino acids motif.

It belongs to the DTD family. In terms of assembly, homodimer.

The protein localises to the cytoplasm. The enzyme catalyses glycyl-tRNA(Ala) + H2O = tRNA(Ala) + glycine + H(+). The catalysed reaction is a D-aminoacyl-tRNA + H2O = a tRNA + a D-alpha-amino acid + H(+). Its function is as follows. An aminoacyl-tRNA editing enzyme that deacylates mischarged D-aminoacyl-tRNAs. Also deacylates mischarged glycyl-tRNA(Ala), protecting cells against glycine mischarging by AlaRS. Acts via tRNA-based rather than protein-based catalysis; rejects L-amino acids rather than detecting D-amino acids in the active site. By recycling D-aminoacyl-tRNA to D-amino acids and free tRNA molecules, this enzyme counteracts the toxicity associated with the formation of D-aminoacyl-tRNA entities in vivo and helps enforce protein L-homochirality. The protein is D-aminoacyl-tRNA deacylase of Dictyoglomus turgidum (strain DSM 6724 / Z-1310).